A 404-amino-acid polypeptide reads, in one-letter code: Chorismate synthase (404 aa).

NADP(+) is bound at residue Arg-47. Residues 156–158, 281–282, Gly-321, 336–340, and Arg-363 contribute to the FMN site; these read RSS, NA, and KPTST.

This sequence belongs to the chorismate synthase family. As to quaternary structure, homotetramer. It depends on FMNH2 as a cofactor.

It carries out the reaction 5-O-(1-carboxyvinyl)-3-phosphoshikimate = chorismate + phosphate. Its pathway is metabolic intermediate biosynthesis; chorismate biosynthesis; chorismate from D-erythrose 4-phosphate and phosphoenolpyruvate: step 7/7. Functionally, catalyzes the anti-1,4-elimination of the C-3 phosphate and the C-6 proR hydrogen from 5-enolpyruvylshikimate-3-phosphate (EPSP) to yield chorismate, which is the branch point compound that serves as the starting substrate for the three terminal pathways of aromatic amino acid biosynthesis. This reaction introduces a second double bond into the aromatic ring system. This is Chorismate synthase from Rhodopirellula baltica (strain DSM 10527 / NCIMB 13988 / SH1).